A 456-amino-acid polypeptide reads, in one-letter code: tRNA modification GTPase MnmE (456 aa).

3 residues coordinate (6S)-5-formyl-5,6,7,8-tetrahydrofolate: arginine 25, glutamate 82, and lysine 121. A TrmE-type G domain is found at 217–379; that stretch reads GIKVVIIGKP…LLDEIVKIAG (163 aa). Position 227 (asparagine 227) interacts with K(+). GTP-binding positions include 227–232, 246–252, and 271–274; these read NAGKSS, TDIAGTT, and DTAG. Residue serine 231 coordinates Mg(2+). 3 residues coordinate K(+): threonine 246, isoleucine 248, and threonine 251. Threonine 252 is a binding site for Mg(2+). Lysine 456 contacts (6S)-5-formyl-5,6,7,8-tetrahydrofolate.

It belongs to the TRAFAC class TrmE-Era-EngA-EngB-Septin-like GTPase superfamily. TrmE GTPase family. As to quaternary structure, homodimer. Heterotetramer of two MnmE and two MnmG subunits. Requires K(+) as cofactor.

The protein resides in the cytoplasm. In terms of biological role, exhibits a very high intrinsic GTPase hydrolysis rate. Involved in the addition of a carboxymethylaminomethyl (cmnm) group at the wobble position (U34) of certain tRNAs, forming tRNA-cmnm(5)s(2)U34. The polypeptide is tRNA modification GTPase MnmE (Endomicrobium trichonymphae).